The chain runs to 410 residues: Arginine deiminase (410 aa).

Cysteine 398 (amidino-cysteine intermediate) is an active-site residue.

The protein belongs to the arginine deiminase family.

The protein resides in the cytoplasm. It carries out the reaction L-arginine + H2O = L-citrulline + NH4(+). It functions in the pathway amino-acid degradation; L-arginine degradation via ADI pathway; carbamoyl phosphate from L-arginine: step 1/2. This chain is Arginine deiminase, found in Limosilactobacillus reuteri (strain DSM 20016) (Lactobacillus reuteri).